The chain runs to 749 residues: Metabotropic glutamate receptor-like protein M (749 aa).

Positions 1 to 22 (MIKLILSLIFLIICCNINPSES) are cleaved as a signal peptide. At 23–385 (FKLITLTTGP…KIEFSSSVQK (363 aa)) the chain is on the extracellular side. 5 N-linked (GlcNAc...) asparagine glycosylation sites follow: Asn-67, Asn-164, Asn-257, Asn-271, and Asn-345. A helical membrane pass occupies residues 386-406 (GFSIVSGCLIAFVILMMVGIV). Over 407-419 (YYKDTPSIRSASP) the chain is Cytoplasmic. Residues 420–440 (IFLNFSLIGGIIIYIGIIIWV) traverse the membrane as a helical segment. Residues 441 to 456 (GPISTHQCNARFWLVT) are Extracellular-facing. A helical transmembrane segment spans residues 457–477 (LGFSTLIGSLVVKNFRIWLIF). Topologically, residues 478–492 (DNPELKAIKITNYQL) are cytoplasmic. A helical membrane pass occupies residues 493-513 (FPWVGLCLVINIVLMAILTSV). Topologically, residues 514-544 (GDLKAIEAQGIDSLGKYEYMTVCKMNSAGAS) are extracellular. Residues 545–565 (TLYSILAYFAALLLVGVFVSW) form a helical membrane-spanning segment. The Cytoplasmic segment spans residues 566–579 (KIRIVDIEEFNESK). A helical transmembrane segment spans residues 580-600 (AIANTLYAVSFCLFVIVPLMI). Topologically, residues 601-609 (SPQEKQSET) are extracellular. Residues 610–630 (IILCVAGLFITTAALLIVFIP) traverse the membrane as a helical segment. The Cytoplasmic portion of the chain corresponds to 631–749 (KFWRVFIYGK…EEPVKTESQE (119 aa)). Residues 658–749 (ARAESLSKNS…EEPVKTESQE (92 aa)) form a disordered region. Over residues 698–716 (SSLSEPNKPTKNNDGNVNV) the composition is skewed to polar residues. The segment covering 725 to 740 (FTDDTISEFDENEVNE) has biased composition (acidic residues).

It in the N-terminal section; belongs to the BMP lipoprotein family. The protein in the C-terminal section; belongs to the G-protein coupled receptor 3 family. GABA-B receptor subfamily.

The protein resides in the membrane. The chain is Metabotropic glutamate receptor-like protein M (grlM) from Dictyostelium discoideum (Social amoeba).